The following is a 115-amino-acid chain: Large ribosomal subunit protein uL24 (115 aa).

It belongs to the universal ribosomal protein uL24 family. In terms of assembly, part of the 50S ribosomal subunit.

In terms of biological role, one of two assembly initiator proteins, it binds directly to the 5'-end of the 23S rRNA, where it nucleates assembly of the 50S subunit. One of the proteins that surrounds the polypeptide exit tunnel on the outside of the subunit. This chain is Large ribosomal subunit protein uL24, found in Deinococcus deserti (strain DSM 17065 / CIP 109153 / LMG 22923 / VCD115).